The primary structure comprises 1492 residues: Condensin-2 complex subunit D3-L (1492 aa).

The disordered stretch occupies residues 152 to 201; sequence WPRDPNASRKRKKDTLKSSQGDNRGGRKRPRPPRRDEQEMEDLSEEEQDE. The span at 189–201 shows a compositional bias: acidic residues; it reads QEMEDLSEEEQDE. HEAT repeat units lie at residues 543–581, 583–619, and 621–659; these read SSDG…CHLI, CSSE…AQPH, and VLIQ…QSIT. Disordered stretches follow at residues 1269 to 1345, 1359 to 1406, and 1454 to 1492; these read QLER…PRPR, RKAA…SLVG, and IMSP…KPSN. A compositionally biased stretch (polar residues) spans 1277–1290; the sequence is NVQNPPSAESTGSP. Residues 1377–1388 show a composition bias toward low complexity; the sequence is PSTPSPARTTSS.

In terms of assembly, component of the condensin-2 complex, which contains the smc2 and smc4 heterodimer, and three non SMC subunits, ncapg2, ncaph2 and ncapd3 that probably regulate the complex.

It is found in the nucleus. Functionally, regulatory subunit of the condensin-2 complex, a complex which establishes mitotic chromosome architecture and is involved in physical rigidity of the chromatid axis. This chain is Condensin-2 complex subunit D3-L, found in Xenopus laevis (African clawed frog).